The following is a 543-amino-acid chain: CTP synthase (543 aa).

Positions 1 to 266 (MTKFIFVTGG…DDIICERFGI (266 aa)) are amidoligase domain. S13 is a binding site for CTP. S13 contacts UTP. ATP-binding positions include 14 to 19 (SLGKGI) and D71. The Mg(2+) site is built by D71 and E140. CTP is bound by residues 147–149 (DIE), 187–192 (KTKPTQ), and K223. UTP contacts are provided by residues 187–192 (KTKPTQ) and K223. The 253-residue stretch at 291 to 543 (TVAIVGKYVE…VKAAIDHQNI (253 aa)) folds into the Glutamine amidotransferase type-1 domain. L-glutamine is bound at residue G354. The active-site Nucleophile; for glutamine hydrolysis is the C381. L-glutamine is bound by residues 382–385 (LGMQ), E404, and R471. Catalysis depends on residues H516 and E518.

Belongs to the CTP synthase family. As to quaternary structure, homotetramer.

It catalyses the reaction UTP + L-glutamine + ATP + H2O = CTP + L-glutamate + ADP + phosphate + 2 H(+). The catalysed reaction is L-glutamine + H2O = L-glutamate + NH4(+). The enzyme catalyses UTP + NH4(+) + ATP = CTP + ADP + phosphate + 2 H(+). It participates in pyrimidine metabolism; CTP biosynthesis via de novo pathway; CTP from UDP: step 2/2. With respect to regulation, allosterically activated by GTP, when glutamine is the substrate; GTP has no effect on the reaction when ammonia is the substrate. The allosteric effector GTP functions by stabilizing the protein conformation that binds the tetrahedral intermediate(s) formed during glutamine hydrolysis. Inhibited by the product CTP, via allosteric rather than competitive inhibition. Catalyzes the ATP-dependent amination of UTP to CTP with either L-glutamine or ammonia as the source of nitrogen. Regulates intracellular CTP levels through interactions with the four ribonucleotide triphosphates. This Psychrobacter sp. (strain PRwf-1) protein is CTP synthase.